The following is a 310-amino-acid chain: Collagen-like protein V6 (310 aa).

The span at M1–Y41 shows a compositional bias: polar residues. Positions M1 to G183 are disordered. Collagen-like domains are found at residues G61–A119 and G123–P182. Over residues S92–S101 the composition is skewed to basic and acidic residues. N227 and N264 each carry an N-linked (GlcNAc...) asparagine; by host glycan.

This sequence belongs to the sputnik virus V6 family.

This is Collagen-like protein V6 from Sputnik virophage.